Here is a 164-residue protein sequence, read N- to C-terminus: R-phycoerythrin alpha chain (164 aa).

(2R,3E)-phycoerythrobilin is bound by residues cysteine 82 and cysteine 139.

This sequence belongs to the phycobiliprotein family. Heterodimer of an alpha and a beta chain. In terms of processing, contains two covalently linked bilin chromophores.

It localises to the plastid. It is found in the chloroplast thylakoid membrane. Functionally, light-harvesting photosynthetic bile pigment-protein from the phycobiliprotein complex. This chain is R-phycoerythrin alpha chain (cpeA), found in Lophosiphonia boldii (Red alga).